A 116-amino-acid chain; its full sequence is Protein Rev (116 aa).

Residues S5 and S8 each carry the phosphoserine; by host CK2 modification. The interval 18 to 26 is homomultimerization; it reads LIKILYQSN. The tract at residues 26 to 50 is disordered; the sequence is NPYPKPNGSRQARRNRRRRWRARQN. The Nuclear localization signal and RNA-binding (RRE) motif lies at 34-50; sequence SRQARRNRRRRWRARQN. The segment covering 36–47 has biased composition (basic residues); the sequence is QARRNRRRRWRA. The Nuclear export signal and binding to XPO1 motif lies at 73-84; that stretch reads LQLPPIERLRLD. The tract at residues 91–116 is disordered; sequence NSGTQGVGDPQISGEPCMVLGAGTKE. S92 carries the post-translational modification Phosphoserine; by host.

This sequence belongs to the HIV-1 REV protein family. In terms of assembly, homomultimer; when bound to the RRE. Multimeric assembly is essential for activity and may involve XPO1. Binds to human KPNB1, XPO1, TNPO1, RANBP5 and IPO7. Interacts with the viral Integrase. Interacts with human KHDRBS1. Interacts with human NAP1; this interaction decreases Rev multimerization and stimulates its activity. Interacts with human DEAD-box helicases DDX3 and DDX24; these interactions may serve for viral RNA export to the cytoplasm and packaging, respectively. Interacts with human PSIP1; this interaction may inhibit HIV-1 DNA integration by promoting dissociation of the Integrase-LEDGF/p75 complex. Asymmetrically arginine dimethylated at one site by host PRMT6. Methylation impairs the RNA-binding activity and export of viral RNA from the nucleus to the cytoplasm. In terms of processing, phosphorylated by protein kinase CK2. Presence of, and maybe binding to the N-terminus of the regulatory beta subunit of CK2 is necessary for CK2-mediated Rev's phosphorylation.

The protein resides in the host nucleus. The protein localises to the host nucleolus. It localises to the host cytoplasm. Escorts unspliced or incompletely spliced viral pre-mRNAs (late transcripts) out of the nucleus of infected cells. These pre-mRNAs carry a recognition sequence called Rev responsive element (RRE) located in the env gene, that is not present in fully spliced viral mRNAs (early transcripts). This function is essential since most viral proteins are translated from unspliced or partially spliced pre-mRNAs which cannot exit the nucleus by the pathway used by fully processed cellular mRNAs. Rev itself is translated from a fully spliced mRNA that readily exits the nucleus. Rev's nuclear localization signal (NLS) binds directly to KPNB1/Importin beta-1 without previous binding to KPNA1/Importin alpha-1. KPNB1 binds to the GDP bound form of RAN (Ran-GDP) and targets Rev to the nucleus. In the nucleus, the conversion from Ran-GDP to Ran-GTP dissociates Rev from KPNB1 and allows Rev's binding to the RRE in viral pre-mRNAs. Rev multimerization on the RRE via cooperative assembly exposes its nuclear export signal (NES) to the surface. Rev can then form a complex with XPO1/CRM1 and Ran-GTP, leading to nuclear export of the complex. Conversion from Ran-GTP to Ran-GDP mediates dissociation of the Rev/RRE/XPO1/RAN complex, so that Rev can return to the nucleus for a subsequent round of export. Beside KPNB1, also seems to interact with TNPO1/Transportin-1, RANBP5/IPO5 and IPO7/RANBP7 for nuclear import. The nucleoporin-like HRB/RIP is an essential cofactor that probably indirectly interacts with Rev to release HIV RNAs from the perinuclear region to the cytoplasm. In Homo sapiens (Human), this protein is Protein Rev.